Here is a 62-residue protein sequence, read N- to C-terminus: Photosystem II reaction center protein Z (62 aa).

The next 2 helical transmembrane spans lie at 8-28 (AVFALIVTSSILLISVPVVFA) and 41-61 (FSGTSLWIGLVFLVGILNSLI).

The protein belongs to the PsbZ family. PSII is composed of 1 copy each of membrane proteins PsbA, PsbB, PsbC, PsbD, PsbE, PsbF, PsbH, PsbI, PsbJ, PsbK, PsbL, PsbM, PsbT, PsbY, PsbZ, Psb30/Ycf12, at least 3 peripheral proteins of the oxygen-evolving complex and a large number of cofactors. It forms dimeric complexes.

It is found in the plastid. The protein resides in the chloroplast thylakoid membrane. May control the interaction of photosystem II (PSII) cores with the light-harvesting antenna, regulates electron flow through the 2 photosystem reaction centers. PSII is a light-driven water plastoquinone oxidoreductase, using light energy to abstract electrons from H(2)O, generating a proton gradient subsequently used for ATP formation. The chain is Photosystem II reaction center protein Z from Cucumis sativus (Cucumber).